Reading from the N-terminus, the 331-residue chain is tRNA-cytidine(32) 2-sulfurtransferase (331 aa).

A PP-loop motif motif is present at residues 73-78 (SGGKDS). Residues cysteine 148, cysteine 151, and cysteine 239 each contribute to the [4Fe-4S] cluster site.

The protein belongs to the TtcA family. As to quaternary structure, homodimer. Mg(2+) serves as cofactor. It depends on [4Fe-4S] cluster as a cofactor.

It localises to the cytoplasm. It catalyses the reaction cytidine(32) in tRNA + S-sulfanyl-L-cysteinyl-[cysteine desulfurase] + AH2 + ATP = 2-thiocytidine(32) in tRNA + L-cysteinyl-[cysteine desulfurase] + A + AMP + diphosphate + H(+). The protein operates within tRNA modification. Its function is as follows. Catalyzes the ATP-dependent 2-thiolation of cytidine in position 32 of tRNA, to form 2-thiocytidine (s(2)C32). The sulfur atoms are provided by the cysteine/cysteine desulfurase (IscS) system. The sequence is that of tRNA-cytidine(32) 2-sulfurtransferase from Burkholderia mallei (strain NCTC 10247).